The primary structure comprises 655 residues: Chaperone protein DnaK 3 (655 aa).

Threonine 197 bears the Phosphothreonine; by autocatalysis mark.

This sequence belongs to the heat shock protein 70 family.

Acts as a chaperone. This chain is Chaperone protein DnaK 3, found in Synechococcus sp. (strain ATCC 27144 / PCC 6301 / SAUG 1402/1) (Anacystis nidulans).